A 601-amino-acid polypeptide reads, in one-letter code: Pyranose 2-oxidase (601 aa).

Tele-8alpha-FAD histidine is present on His151. The substrate site is built by Gln406 and His408. The Proton acceptor role is filled by His505. Residue Asn558 is part of the active site. The tract at residues Lys577 to Ala601 is disordered. Over residues Gly591–Ala601 the composition is skewed to acidic residues.

Belongs to the GMC oxidoreductase family. As to quaternary structure, homotetramer. FAD is required as a cofactor.

It carries out the reaction D-glucose + O2 = 2-dehydro-D-glucose + H2O2. Its function is as follows. Catalyzes the oxidation of various aldopyranoses and disaccharides on carbon-2 to the corresponding 2-keto sugars concomitant with the reduction of O(2) to H(2)O(2). The chain is Pyranose 2-oxidase (p2ox) from Emericella nidulans (strain FGSC A4 / ATCC 38163 / CBS 112.46 / NRRL 194 / M139) (Aspergillus nidulans).